Here is a 208-residue protein sequence, read N- to C-terminus: ATP phosphoribosyltransferase (208 aa).

The protein belongs to the ATP phosphoribosyltransferase family. Short subfamily. In terms of assembly, heteromultimer composed of HisG and HisZ subunits.

Its subcellular location is the cytoplasm. The catalysed reaction is 1-(5-phospho-beta-D-ribosyl)-ATP + diphosphate = 5-phospho-alpha-D-ribose 1-diphosphate + ATP. It functions in the pathway amino-acid biosynthesis; L-histidine biosynthesis; L-histidine from 5-phospho-alpha-D-ribose 1-diphosphate: step 1/9. Its function is as follows. Catalyzes the condensation of ATP and 5-phosphoribose 1-diphosphate to form N'-(5'-phosphoribosyl)-ATP (PR-ATP). Has a crucial role in the pathway because the rate of histidine biosynthesis seems to be controlled primarily by regulation of HisG enzymatic activity. The chain is ATP phosphoribosyltransferase from Lactococcus lactis subsp. cremoris (strain MG1363).